Here is a 953-residue protein sequence, read N- to C-terminus: TPR repeat-containing protein ZIP4 (953 aa).

The TPR 1 repeat unit spans residues 129-162; the sequence is ASFFHRSGLAWLDLGRVDLASACFEKATPLVSAA. A disordered region spans residues 248 to 269; that stretch reads AASPSSSSPRTPPYGGATPKTP. TPR repeat units follow at residues 432–465 and 473–506; these read HALL…VSRD and ADCF…EPNI. Residues 925-953 are disordered; it reads VSGDEPDECSQEEAPKASISGSMSQPVLV. A compositionally biased stretch (polar residues) spans 943–953; it reads ISGSMSQPVLV.

In terms of assembly, interacts with HEI10 and SHOC1.

The protein localises to the nucleus. Its subcellular location is the chromosome. Functionally, required for crossover formation, complete synapsis of homologous chromosomes and bivalent formation during meiosis. Is specific to recombination events resulting in interference-sensitive crossovers (class I meiotic crossover) and works cooperatively with MER3 to promote crossovers. The polypeptide is TPR repeat-containing protein ZIP4 (Oryza sativa subsp. japonica (Rice)).